A 632-amino-acid chain; its full sequence is Deoxynucleoside triphosphate triphosphohydrolase SAMHD1 (632 aa).

The tract at residues 1 to 22 (MKGINGAKRVRHDASPSAQDGY) is disordered. In terms of domain architecture, SAM spans 44 to 107 (WDVEEVCLFL…LSCLRMLCQN (64 aa)). GTP-binding residues include lysine 113 and valine 114. Asparagine 116 is a binding site for dGTP. GTP contacts are provided by aspartate 134, glutamine 139, and arginine 142. Glutamine 146, leucine 147, valine 153, and arginine 161 together coordinate dGTP. Residue glutamine 146 participates in dATP binding. A dCTP-binding site is contributed by glutamine 146. Residue glutamine 146 coordinates dTTP. A dATP-binding site is contributed by arginine 161. Residue arginine 161 coordinates dCTP. Arginine 161 is a binding site for dTTP. Residues 161–321 (RFEHSIGVGY…GIDVDKWDYF (161 aa)) form the HD domain. Mn(2+) is bound by residues histidine 164, histidine 203, and aspartate 204. DATP is bound by residues histidine 207 and histidine 212. DCTP contacts are provided by histidine 207 and histidine 212. Histidine 207 and histidine 212 together coordinate dTTP. The active site involves histidine 230. A Mn(2+)-binding site is contributed by aspartate 316. DGTP contacts are provided by lysine 317, tyrosine 320, aspartate 324, arginine 338, arginine 357, lysine 359, asparagine 363, arginine 371, tyrosine 379, glutamine 380, histidine 381, and lysine 382. DATP-binding residues include lysine 317, tyrosine 320, and aspartate 324. The dCTP site is built by lysine 317, tyrosine 320, and aspartate 324. Residues lysine 317, tyrosine 320, and aspartate 324 each coordinate dTTP. Arginine 371 contacts dATP. Arginine 371 is a binding site for dCTP. Glutamine 380 is a binding site for dATP. Position 380 (glutamine 380) interacts with dCTP. Glutamine 380 provides a ligand contact to dTTP. Positions 456, 460, and 529 each coordinate GTP. Lysine 529 serves as a coordination point for dGTP.

The protein belongs to the SAMHD1 family. As to quaternary structure, homodimer; in absence of GTP and dNTP. Homotetramer; in GTP- and dNTP-bound form. Interacts with rbbp8/CtIP. Zn(2+) serves as cofactor.

The protein resides in the nucleus. It is found in the chromosome. The enzyme catalyses a 2'-deoxyribonucleoside 5'-triphosphate + H2O = a 2'-deoxyribonucleoside + triphosphate + H(+). It carries out the reaction dATP + H2O = 2'-deoxyadenosine + triphosphate + H(+). It catalyses the reaction dCTP + H2O = 2'-deoxycytidine + triphosphate + H(+). The catalysed reaction is dGTP + H2O = 2'-deoxyguanosine + triphosphate + H(+). The enzyme catalyses dTTP + H2O = thymidine + triphosphate + H(+). Its activity is regulated as follows. Allosterically activated and regulated via the combined actions of GTP and dNTPs (dATP, dGTP, dTTP and dCTP): Allosteric site 1 binds GTP, while allosteric site 2 binds dNTP. Allosteric activation promotes the formation of highly active homotetramers. Functionally, protein that acts both as a host restriction factor involved in defense response to virus and as a regulator of DNA end resection at stalled replication forks. Has deoxynucleoside triphosphate (dNTPase) activity, which is required to restrict infection by viruses: dNTPase activity reduces cellular dNTP levels to levels too low for retroviral reverse transcription to occur, blocking early-stage virus replication in dendritic and other myeloid cells. Functions during S phase at stalled DNA replication forks to promote the resection of gapped or reversed forks: acts by stimulating the exonuclease activity of mre11, activating the ATR-CHK1 pathway and allowing the forks to restart replication. Ability to promote DNA end resection at stalled replication forks is independent of dNTPase activity. This Xenopus laevis (African clawed frog) protein is Deoxynucleoside triphosphate triphosphohydrolase SAMHD1.